The chain runs to 61 residues: Large ribosomal subunit protein uL30 (61 aa).

This sequence belongs to the universal ribosomal protein uL30 family. In terms of assembly, part of the 50S ribosomal subunit.

This chain is Large ribosomal subunit protein uL30, found in Corynebacterium efficiens (strain DSM 44549 / YS-314 / AJ 12310 / JCM 11189 / NBRC 100395).